Here is a 236-residue protein sequence, read N- to C-terminus: Large ribosomal subunit protein uL3 (236 aa).

It belongs to the universal ribosomal protein uL3 family. Part of the 50S ribosomal subunit. Forms a cluster with proteins L14 and L19.

One of the primary rRNA binding proteins, it binds directly near the 3'-end of the 23S rRNA, where it nucleates assembly of the 50S subunit. This chain is Large ribosomal subunit protein uL3, found in Anaeromyxobacter dehalogenans (strain 2CP-C).